Consider the following 240-residue polypeptide: Lysoplasmalogenase TMEM86A (240 aa).

The Cytoplasmic portion of the chain corresponds to 1–21 (MVSPVTVVKSEGPKLVPFFKA). Residues 22 to 42 (TCVYFVLWLPSSSPSWVSTLI) form a helical membrane-spanning segment. Residue lysine 43 is a topological domain, extracellular. The helical transmembrane segment at 44–64 (CLPIFCLWLFLLAHGLGFLLA) threads the bilayer. The Cytoplasmic segment spans residues 65–70 (HPSATR). Residues 71 to 91 (IFVGLVFSAVGDAFLIWQDQG) form a helical membrane-spanning segment. A topological domain (extracellular) is located at residue tyrosine 92. A helical membrane pass occupies residues 93-113 (FVHGLLMFAVTHMFYASAFGM). Residues 114-115 (QP) lie on the Cytoplasmic side of the membrane. Residues 116 to 136 (LALRTGLVMAALSGLCYALLY) form a helical membrane-spanning segment. The Extracellular portion of the chain corresponds to 137–138 (PC). A helical transmembrane segment spans residues 139–159 (LSGAFTYLVGVYVALIGFMGW). At 160–174 (RAMAGLRLAGADWRW) the chain is on the cytoplasmic side. The helical transmembrane segment at 175-195 (TELAAGSGALFFIISDLTIAL) threads the bilayer. Residues 196-206 (NKFCFPVPYSR) are Extracellular-facing. A helical membrane pass occupies residues 207–227 (ALIMSTYYVAQMLVALSAVES). Topologically, residues 228 to 240 (REPVEHYRLTKAN) are cytoplasmic.

This sequence belongs to the TMEM86 family. In terms of tissue distribution, expressed in the macrophages.

The protein resides in the endoplasmic reticulum membrane. The catalysed reaction is a 1-O-(1Z-alkenyl)-sn-glycero-3-phosphocholine + H2O = a 2,3-saturated aldehyde + sn-glycerol 3-phosphocholine. The enzyme catalyses a 1-O-(1Z-alkenyl)-sn-glycero-3-phosphoethanolamine + H2O = a 2,3-saturated aldehyde + sn-glycero-3-phosphoethanolamine. Catalyzes the hydrolysis of the vinyl ether bond of choline or ethanolamine lysoplasmalogens, forming fatty aldehyde and glycerophosphocholine or glycerophosphoethanolamine, respectively and is specific for the sn-2-deacylated (lyso) form of plasmalogen. Plays an important role in lysoplasmalogen metabolism in the adipocyte tissue and macrophages. This chain is Lysoplasmalogenase TMEM86A (TMEM86A), found in Homo sapiens (Human).